Consider the following 306-residue polypeptide: D-alanine--D-alanine ligase (306 aa).

The ATP-grasp domain maps to 101–303 (KQVWQAVGLP…FSQLVVKILE (203 aa)). 134-189 (FTHLGLPLIVKPSREGSSVGMSKVNTLSDLPAALEEAFRHDDDVLVEKWLSGPEYT) contacts ATP. The Mg(2+) site is built by D257, E270, and N272.

This sequence belongs to the D-alanine--D-alanine ligase family. Requires Mg(2+) as cofactor. The cofactor is Mn(2+).

The protein localises to the cytoplasm. It catalyses the reaction 2 D-alanine + ATP = D-alanyl-D-alanine + ADP + phosphate + H(+). It functions in the pathway cell wall biogenesis; peptidoglycan biosynthesis. Cell wall formation. This is D-alanine--D-alanine ligase from Pectobacterium atrosepticum (strain SCRI 1043 / ATCC BAA-672) (Erwinia carotovora subsp. atroseptica).